The chain runs to 309 residues: Protein-L-isoaspartate O-methyltransferase (309 aa).

The interval 1 to 46 is disordered; sequence MSGERAKRFPLALEDLKRAPRKSDGRAGERHAAIAAPKAADKPAAV. The segment covering 14-32 has biased composition (basic and acidic residues); sequence EDLKRAPRKSDGRAGERHA. The segment covering 33–46 has biased composition (low complexity); the sequence is AIAAPKAADKPAAV. Residue serine 156 is part of the active site.

This sequence belongs to the methyltransferase superfamily. L-isoaspartyl/D-aspartyl protein methyltransferase family.

It localises to the cytoplasm. It carries out the reaction [protein]-L-isoaspartate + S-adenosyl-L-methionine = [protein]-L-isoaspartate alpha-methyl ester + S-adenosyl-L-homocysteine. Catalyzes the methyl esterification of L-isoaspartyl residues in peptides and proteins that result from spontaneous decomposition of normal L-aspartyl and L-asparaginyl residues. It plays a role in the repair and/or degradation of damaged proteins. The chain is Protein-L-isoaspartate O-methyltransferase from Burkholderia vietnamiensis (strain G4 / LMG 22486) (Burkholderia cepacia (strain R1808)).